Consider the following 154-residue polypeptide: Lipoprotein signal peptidase (154 aa).

3 consecutive transmembrane segments (helical) span residues 4–24, 62–82, and 84–104; these read IIIP…KLWI, LFTL…MKHI, and GSYW…GNFI. Active-site residues include D114 and D130. The helical transmembrane segment at 125–145 threads the bilayer; it reads IFNVADSYLTIGIICLMIALW.

It belongs to the peptidase A8 family.

Its subcellular location is the cell membrane. It catalyses the reaction Release of signal peptides from bacterial membrane prolipoproteins. Hydrolyzes -Xaa-Yaa-Zaa-|-(S,diacylglyceryl)Cys-, in which Xaa is hydrophobic (preferably Leu), and Yaa (Ala or Ser) and Zaa (Gly or Ala) have small, neutral side chains.. It functions in the pathway protein modification; lipoprotein biosynthesis (signal peptide cleavage). This protein specifically catalyzes the removal of signal peptides from prolipoproteins. In Streptococcus agalactiae serotype Ia (strain ATCC 27591 / A909 / CDC SS700), this protein is Lipoprotein signal peptidase.